The primary structure comprises 185 residues: MKNTYLTGYFPLIAILLFSSSLSISTSLYALKMLSSFGMYDGMLDYFSEKGIRLALFAAFALLYFMVLSALKLIANTVTELSLLFFANDPEGNNLKKLRMGSMIYLGGGILSFVLLQNVIWIVIWFAVVTLAYFVFTVYRIYSTLSLMSLVGFILLELLFWFTFVIGILFIFIKLYNSIMASLPV.

Helical transmembrane passes span 4 to 24, 54 to 74, 98 to 118, 119 to 139, and 153 to 173; these read TYLTGYFPLIAILLFSSSLSI, LALFAAFALLYFMVLSALKLI, LRMGSMIYLGGGILSFVLLQN, VIWIVIWFAVVTLAYFVFTVY, and FILLELLFWFTFVIGILFIFI.

It is found in the cell membrane. This is an uncharacterized protein from Bacillus subtilis (strain 168).